The sequence spans 148 residues: uncharacterized protein (148 aa).

2 CBS domains span residues 8–68 and 74–130; these read MTAD…PNSQ and MTEK…ERAG. The disordered stretch occupies residues 127–148; that stretch reads ERAGSALSDISEGDNREEGFFH. Residues 139 to 148 are compositionally biased toward basic and acidic residues; sequence GDNREEGFFH.

This is an uncharacterized protein from Bacillus subtilis (strain 168).